A 316-amino-acid chain; its full sequence is Transaldolase (316 aa).

K132 acts as the Schiff-base intermediate with substrate in catalysis.

It belongs to the transaldolase family. Type 1 subfamily. In terms of assembly, homodimer.

It is found in the cytoplasm. It catalyses the reaction D-sedoheptulose 7-phosphate + D-glyceraldehyde 3-phosphate = D-erythrose 4-phosphate + beta-D-fructose 6-phosphate. It participates in carbohydrate degradation; pentose phosphate pathway; D-glyceraldehyde 3-phosphate and beta-D-fructose 6-phosphate from D-ribose 5-phosphate and D-xylulose 5-phosphate (non-oxidative stage): step 2/3. Its function is as follows. Transaldolase is important for the balance of metabolites in the pentose-phosphate pathway. The polypeptide is Transaldolase (Methylobacillus flagellatus (strain ATCC 51484 / DSM 6875 / VKM B-1610 / KT)).